Reading from the N-terminus, the 208-residue chain is Large ribosomal subunit protein bL25 (208 aa).

The disordered stretch occupies residues 163–208 (DYSYNHEPDEVVASILPPQKQEETEAESAAQDVEEPEKGTEEEKEE). Positions 198-208 (PEKGTEEEKEE) are enriched in basic and acidic residues.

This sequence belongs to the bacterial ribosomal protein bL25 family. CTC subfamily. Part of the 50S ribosomal subunit; part of the 5S rRNA/L5/L18/L25 subcomplex. Contacts the 5S rRNA. Binds to the 5S rRNA independently of L5 and L18.

Its function is as follows. This is one of the proteins that binds to the 5S RNA in the ribosome where it forms part of the central protuberance. This is Large ribosomal subunit protein bL25 from Bacillus licheniformis (strain ATCC 14580 / DSM 13 / JCM 2505 / CCUG 7422 / NBRC 12200 / NCIMB 9375 / NCTC 10341 / NRRL NRS-1264 / Gibson 46).